We begin with the raw amino-acid sequence, 229 residues long: tRNA (guanine-N(7)-)-methyltransferase (229 aa).

S-adenosyl-L-methionine is bound by residues E59, E84, D111, and D134. Residue D134 is part of the active site. K138 provides a ligand contact to substrate. The tract at residues 140–145 (KHNKRR) is interaction with RNA. Residues D170 and 207–210 (TKFE) each bind substrate.

The protein belongs to the class I-like SAM-binding methyltransferase superfamily. TrmB family.

The enzyme catalyses guanosine(46) in tRNA + S-adenosyl-L-methionine = N(7)-methylguanosine(46) in tRNA + S-adenosyl-L-homocysteine. It participates in tRNA modification; N(7)-methylguanine-tRNA biosynthesis. Catalyzes the formation of N(7)-methylguanine at position 46 (m7G46) in tRNA. The polypeptide is tRNA (guanine-N(7)-)-methyltransferase (Saccharophagus degradans (strain 2-40 / ATCC 43961 / DSM 17024)).